The primary structure comprises 112 residues: Cornifelin homolog (112 aa).

This sequence belongs to the cornifelin family.

This Danio rerio (Zebrafish) protein is Cornifelin homolog (cnfn).